The following is a 113-amino-acid chain: P antigen family member 3 (113 aa).

Residues 1 to 12 (MSGHQRTRSRSR) are compositionally biased toward basic residues. 2 disordered regions span residues 1-61 (MSGH…EGAL) and 78-113 (SKTG…QPSV).

It belongs to the GAGE family.

In Homo sapiens (Human), this protein is P antigen family member 3 (PAGE3).